The chain runs to 1151 residues: Error-prone DNA polymerase (1151 aa).

Residues 1108–1151 (HPVPSGDALIEPLNDDRRDHADAPAQKIRHPRNVRILPPSRDFH) form a disordered region.

This sequence belongs to the DNA polymerase type-C family. DnaE2 subfamily.

Its subcellular location is the cytoplasm. It catalyses the reaction DNA(n) + a 2'-deoxyribonucleoside 5'-triphosphate = DNA(n+1) + diphosphate. Its function is as follows. DNA polymerase involved in damage-induced mutagenesis and translesion synthesis (TLS). It is not the major replicative DNA polymerase. This is Error-prone DNA polymerase from Bradyrhizobium diazoefficiens (strain JCM 10833 / BCRC 13528 / IAM 13628 / NBRC 14792 / USDA 110).